Reading from the N-terminus, the 45-residue chain is Movement protein P3a (45 aa).

Residues 9-29 (FALGFSSAIPFSVAGLYFVYL) form a helical membrane-spanning segment.

It belongs to the polerovirus movement protein P3a family. Homodimer. Heterodimer with movement protein P17.

It is found in the host cell junction. The protein localises to the host plasmodesma. It localises to the host Golgi apparatus. Its subcellular location is the host chloroplast envelope. The protein resides in the host mitochondrion outer membrane. Together with movement protein P17, plays an essential role in virus long distance movement. This Solanum tuberosum (Potato) protein is Movement protein P3a (ORF3a).